A 513-amino-acid polypeptide reads, in one-letter code: ATP synthase subunit alpha (513 aa).

Residue 169–176 (GDRQTGKT) coordinates ATP.

This sequence belongs to the ATPase alpha/beta chains family. F-type ATPases have 2 components, CF(1) - the catalytic core - and CF(0) - the membrane proton channel. CF(1) has five subunits: alpha(3), beta(3), gamma(1), delta(1), epsilon(1). CF(0) has three main subunits: a(1), b(2) and c(9-12). The alpha and beta chains form an alternating ring which encloses part of the gamma chain. CF(1) is attached to CF(0) by a central stalk formed by the gamma and epsilon chains, while a peripheral stalk is formed by the delta and b chains.

The protein resides in the cell inner membrane. The enzyme catalyses ATP + H2O + 4 H(+)(in) = ADP + phosphate + 5 H(+)(out). Its function is as follows. Produces ATP from ADP in the presence of a proton gradient across the membrane. The alpha chain is a regulatory subunit. This Dichelobacter nodosus (strain VCS1703A) protein is ATP synthase subunit alpha.